An 834-amino-acid polypeptide reads, in one-letter code: Protein kintoun (834 aa).

Disordered stretches follow at residues 214-239 (TAEE…KQEP), 374-415 (SRED…SVAP), 547-669 (KGKV…STGR), and 759-834 (KKNQ…EMDD). At serine 378 the chain carries Phosphoserine. Acidic residues predominate over residues 389–398 (PVEEDPDGEL). The span at 552-571 (AKKDNAPLDVKFERNQEGHA) shows a compositional bias: basic and acidic residues. Acidic residues predominate over residues 582–596 (EEEEDKENQDQEPES). A compositionally biased stretch (low complexity) spans 597–607 (DQQQQQQVQNK). Composition is skewed to basic residues over residues 608-619 (KPGKKQRKKNKK) and 759-773 (KKNQ…RAQQ). Serine 777 is subject to Phosphoserine. Basic and acidic residues predominate over residues 785 to 798 (EETRGSALKQEENP).

It belongs to the PIH1 family. Kintoun subfamily. Interacts with Pp1alpha-96A, Pp1-87B, Pp1-13C and flw.

The protein localises to the cytoplasm. In terms of biological role, required for cytoplasmic pre-assembly of axonemal dyneins, thereby playing a central role in motility in cilia and flagella. Involved in pre-assembly of dynein arm complexes in the cytoplasm before intraflagellar transport loads them for the ciliary compartment. The protein is Protein kintoun of Drosophila melanogaster (Fruit fly).